The following is a 426-amino-acid chain: Serine--tRNA ligase (426 aa).

233–235 (TAE) provides a ligand contact to L-serine. 264-266 (RSE) provides a ligand contact to ATP. Residue E287 coordinates L-serine. Residue 351–354 (EISS) coordinates ATP. S387 is an L-serine binding site.

It belongs to the class-II aminoacyl-tRNA synthetase family. Type-1 seryl-tRNA synthetase subfamily. In terms of assembly, homodimer. The tRNA molecule binds across the dimer.

It is found in the cytoplasm. It carries out the reaction tRNA(Ser) + L-serine + ATP = L-seryl-tRNA(Ser) + AMP + diphosphate + H(+). The catalysed reaction is tRNA(Sec) + L-serine + ATP = L-seryl-tRNA(Sec) + AMP + diphosphate + H(+). The protein operates within aminoacyl-tRNA biosynthesis; selenocysteinyl-tRNA(Sec) biosynthesis; L-seryl-tRNA(Sec) from L-serine and tRNA(Sec): step 1/1. Catalyzes the attachment of serine to tRNA(Ser). Is also able to aminoacylate tRNA(Sec) with serine, to form the misacylated tRNA L-seryl-tRNA(Sec), which will be further converted into selenocysteinyl-tRNA(Sec). The chain is Serine--tRNA ligase from Clostridium botulinum (strain Hall / ATCC 3502 / NCTC 13319 / Type A).